An 827-amino-acid polypeptide reads, in one-letter code: Villin-1 (827 aa).

Positions 1–126 (MTKLNAQVKG…IRKGGVASGM (126 aa)) are necessary for homodimerization. The segment at 1 to 734 (MTKLNAQVKG…YDDLKAELGN (734 aa)) is core. A Gelsolin-like 1 repeat occupies 27–76 (MQMVPVPSSTFGSFFDGDCYVVLAIHKTSSTLSYDIHYWIGQDSSQDEQG). LPA/PIP2-binding site stretches follow at residues 112-119 (KQGLVIRK) and 138-146 (RLLHVKGKR). Gelsolin-like repeat units follow at residues 148–188 (VLAG…MERL) and 265–309 (LVVR…QERS). A Phosphoserine modification is found at Ser-366. Gelsolin-like repeat units lie at residues 407-457 (DLEL…DEIA), 528-568 (TKAF…DERE), and 631-672 (FLAT…EEKK). A phosphoserine mark is found at Ser-735 and Ser-776. The headpiece stretch occupies residues 735 to 827 (SGDWSQIADE…QNIKKEKGLF (93 aa)). The HP domain occupies 761–827 (SGPLPTFPLE…QNIKKEKGLF (67 aa)). The LPA/PIP2-binding site 3 stretch occupies residues 816–824 (KQQNIKKEK).

The protein belongs to the villin/gelsolin family. In terms of assembly, monomer. Homodimer; homodimerization is necessary for actin-bundling. Associates with F-actin; phosphorylation at tyrosine residues decreases the association with F-actin. Interacts (phosphorylated at C-terminus tyrosine phosphorylation sites) with PLCG1 (via the SH2 domains). Interacts (phosphorylated form) with PLCG1; the interaction is enhanced by hepatocyte growth factor (HGF). Post-translationally, phosphorylated on tyrosine residues by SRC. The unphosphorylated form increases the initial rate of actin-nucleating activity, whereas the tyrosine phosphorylated form inhibits actin-nucleating activity, enhances actin-bundling activity and enhances actin-severing activity by reducing high Ca(2+) requirements. The tyrosine phosphorylated form does not regulate actin-capping activity. Tyrosine phosphorylation is essential for cell migration: tyrosine phosphorylation sites in the N-terminus half regulate actin reorganization and cell morphology, whereas tyrosine phosphorylation sites in the C-terminus half regulate cell migration via interaction with PLCG1. Tyrosine phosphorylation is induced by epidermal growth factor (EGF) and stimulates cell migration. In terms of tissue distribution, expressed in small intestin, colon, kidney and enterocytes (at protein level).

The protein localises to the cytoplasm. The protein resides in the cytoskeleton. Its subcellular location is the cell projection. It is found in the microvillus. It localises to the lamellipodium. The protein localises to the ruffle. The protein resides in the filopodium tip. Its subcellular location is the filopodium. Functionally, epithelial cell-specific Ca(2+)-regulated actin-modifying protein that modulates the reorganization of microvillar actin filaments. Plays a role in the actin nucleation, actin filament bundle assembly, actin filament capping and severing. Binds phosphatidylinositol 4,5-bisphosphate (PIP2) and lysophosphatidic acid (LPA); binds LPA with higher affinity than PIP2. Binding to LPA increases its phosphorylation by SRC and inhibits all actin-modifying activities. Binding to PIP2 inhibits actin-capping and -severing activities but enhances actin-bundling activity. Regulates the intestinal epithelial cell morphology, cell invasion, cell migration and apoptosis. Protects against apoptosis induced by dextran sodium sulfate (DSS) in the gastrointestinal epithelium. Appears to regulate cell death by maintaining mitochondrial integrity. Enhances hepatocyte growth factor (HGF)-induced epithelial cell motility, chemotaxis and wound repair. Upon S.flexneri cell infection, its actin-severing activity enhances actin-based motility of the bacteria and plays a role during the dissemination. The sequence is that of Villin-1 (Vil1) from Mus musculus (Mouse).